The sequence spans 510 residues: MFIESFKVESPNVKYTEGEIHSVYNYETTELVHESRNGTYQWIVKPKTVKYEFKTDTHVPKLGVMLVGWGGNNGSTLTGGVIANREGISWATKDKVQQANYFGSLTQASSIRVGSFNGEEIYAPFKSLLPMVNPDDVVFGGWDISNMNLADAMGRAKVLDIDLQKQLRPYMEHMVPLPGIYDPDFIAANQGSRANNVIKGTKKEQVQQIIKDMRDFKEQNKVDKVVVLWTANTERYSNVVVGLNDTAESLMASVERNEAEISPSTLYAIACVFENVPFINGSPQNTFVPGLIDLAIQRNSLIGGDDFKSGQTKMKSVLVDFLVGAGIKPTSIVSYNHLGNNDGMNLSAPQTFRSKEISKSNVVDDMVASNGILYEPGEHPDHIVVIKYVPYVGDSKRAMDEYTSEIFMGGKSTIVLHNTCEDSLLAAPIILDLVLLAELSTRIQLKAEGEGKFHSFHPVATILSYLTKAPLVPPGTPVVNALSKQRAMLENILRACVGLAPENNMILEYK.

Residues glycine 70, glycine 71, asparagine 72, asparagine 73, aspartate 143, isoleucine 180, glutamine 190, arginine 193, threonine 230, alanine 231, asparagine 232, threonine 233, glycine 281, serine 282, aspartate 306, serine 309, asparagine 340, asparagine 341, aspartate 342, lysine 355, glycine 393, aspartate 394, aspartate 422, and serine 423 each coordinate NAD(+).

The protein belongs to the myo-inositol 1-phosphate synthase family. NAD(+) serves as cofactor.

The protein localises to the cytoplasm. It is found in the cytosol. It localises to the nucleus. It carries out the reaction D-glucose 6-phosphate = 1D-myo-inositol 3-phosphate. The protein operates within polyol metabolism; myo-inositol biosynthesis; myo-inositol from D-glucose 6-phosphate: step 1/2. Its function is as follows. Key enzyme in myo-inositol biosynthesis pathway that catalyzes the conversion of glucose 6-phosphate to 1-myo-inositol 1-phosphate in a NAD-dependent manner. The sequence is that of Inositol-3-phosphate synthase from Sesamum indicum (Oriental sesame).